The following is an 872-amino-acid chain: C-mannosyltransferase dpy-19 homolog (872 aa).

9 helical membrane-spanning segments follow: residues 4–24 (PNLY…FLYV), 126–146 (FVWL…TLLS), 149–169 (IFGG…VAKI), 179–199 (FAFP…GRII), 211–231 (IFAM…STFI), 257–277 (VLDY…MSHG), 279–299 (SQLL…ITMV), 326–346 (FLML…ELFN), and 399–419 (VKTM…AMFF). Residues 508–535 (KRLRAQINRNSVKQRKERAQETKEAATD) are a coiled coil. A disordered region spans residues 514–620 (INRNSVKQRK…RSSSRRSSVV (107 aa)). The span at 524–533 (ERAQETKEAA) shows a compositional bias: basic and acidic residues. Residues 541 to 551 (TEEEDKDPEAE) are compositionally biased toward acidic residues. A run of 2 helical transmembrane segments spans residues 627-647 (ILNM…LIGL) and 678-698 (NIFW…PGMV).

Belongs to the dpy-19 family.

Its subcellular location is the membrane. Its function is as follows. Probable C-mannosyltransferase that mediates C-mannosylation of tryptophan residues on target proteins. This is C-mannosyltransferase dpy-19 homolog from Drosophila melanogaster (Fruit fly).